Reading from the N-terminus, the 96-residue chain is Putative defensin-like protein 236 (96 aa).

Positions 1-23 (MKNATSLIIYCFLMFLLMNNVKG) are cleaved as a signal peptide. Cystine bridges form between cysteine 31–cysteine 93, cysteine 41–cysteine 70, cysteine 49–cysteine 83, and cysteine 68–cysteine 85.

Belongs to the DEFL family.

The protein localises to the secreted. This is Putative defensin-like protein 236 (SCRL20) from Arabidopsis thaliana (Mouse-ear cress).